Reading from the N-terminus, the 1252-residue chain is Guanine nucleotide exchange factor SDC25 (1252 aa).

The region spanning 26 to 97 (QPIDVVECTY…PPSFTRSILN (72 aa)) is the SH3 domain. 2 disordered regions span residues 409–454 (IPAS…DTIW) and 623–648 (LNLDNAKDKKNGSQNTDIQEEEDEYE). Residues 416–428 (TSCSSETSHHSPS) are compositionally biased toward low complexity. The N-terminal Ras-GEF domain occupies 782–914 (SNNRIKGGSK…LLKEVNQKFK (133 aa)). The region spanning 952–1199 (DPVLFATQLT…YQLSLIIEPK (248 aa)) is the Ras-GEF domain. Positions 1201–1252 (RKKVVPNSNSNNKSQEKSRDDQTDEGKTSTKKDRFSKFQLHKTKKKAPKVSK) are disordered. Positions 1214-1236 (SQEKSRDDQTDEGKTSTKKDRFS) are enriched in basic and acidic residues. A compositionally biased stretch (basic residues) spans 1239–1252 (QLHKTKKKAPKVSK).

Functionally, promotes the exchange of Ras-bound GDP by GTP. The sequence is that of Guanine nucleotide exchange factor SDC25 (SDC25) from Saccharomyces cerevisiae (strain YJM789) (Baker's yeast).